Reading from the N-terminus, the 637-residue chain is MPNVKLPDGNVKHFEAPLTIYDVAHHISPGLAKAAIAGRVDGVLVDTSYLIKEDCSLIIVTEKHEDSLEIIRHSTAHLLAQAVKALFPSAQVTIGPVIEDGFYYDFAFERSFTPDDLSLIEAKMHELAKANLSITRRELPRNEAIQYFKGLGEEYKAKIIADIPENEALSLYRQGDFEDLCRGPHVPSTGFLKAFKLTKVAGAYWRGDSNNEMLQRIYGTAWADKKSLEEYLFRLEEAEKRDHRKLGKALDLFHFQDIAPGMVFWHPKGWTIYQELEHYMRNRLVDFGYQEIRTPQLVDRSLWEKSGHWANFRDEMFVTETENRHYAVKPMSCPCHVQIYNHGLKSYRDLPLRLSEFGNCHRCEPSGALHGLMRVRNMVQDDAHIFCTEDQIQSEVAMMLELVQSVYKDFGFTEIKYRLALRPEKRVGSDDVWDKAETALKLAMLGRNIEWVDAPGEGAFYGPKIECSLSDCLGRIWQCGTIQVDFSMPARLEASYVAEDGSKQTPVMLHRAILGSFERFMGILIEHYAGKLPLWLSPVQAVVLTISEKQNEYAEKVRKTLQKRGIRANFDLRNEKIGFKIREHTLQKIPYLLVVGDKEVENCQVAVRTRDGIDLGVMTIDTICDTLTQEIIRKGSI.

The region spanning 1–61 is the TGS domain; the sequence is MPNVKLPDGN…KEDCSLIIVT (61 aa). A catalytic region spans residues 242–533; the sequence is DHRKLGKALD…LIEHYAGKLP (292 aa). Residues cysteine 333, histidine 384, and histidine 510 each coordinate Zn(2+).

It belongs to the class-II aminoacyl-tRNA synthetase family. Homodimer. The cofactor is Zn(2+).

It localises to the cytoplasm. It carries out the reaction tRNA(Thr) + L-threonine + ATP = L-threonyl-tRNA(Thr) + AMP + diphosphate + H(+). Catalyzes the attachment of threonine to tRNA(Thr) in a two-step reaction: L-threonine is first activated by ATP to form Thr-AMP and then transferred to the acceptor end of tRNA(Thr). Also edits incorrectly charged L-seryl-tRNA(Thr). The polypeptide is Threonine--tRNA ligase (Legionella pneumophila (strain Paris)).